Reading from the N-terminus, the 421-residue chain is Synaptotagmin-12 (421 aa).

Over 1–18 (MAVDVTEYHLSVIKSPPG) the chain is Vesicular. The helical transmembrane segment at 19 to 39 (WEVGVYAAGALALLGIAAVSL) threads the bilayer. The Cytoplasmic segment spans residues 40–421 (WKLWTSGSFP…VSMWHPVRRN (382 aa)). Ser97 carries the phosphoserine; by PKA modification. Phosphoserine occurs at positions 99 and 214. C2 domains lie at 152–272 (TLGQ…SGWL) and 283–416 (AVGE…SMWH).

Belongs to the synaptotagmin family. In terms of assembly, homodimer. Can also form heterodimers. Interacts with SYT1. Phosphorylation of Ser-97 is required for mossy-fiber long-term potentiation. In terms of tissue distribution, expressed in the brain, specifically by neurons in the hippocampus, and in the adrenal medulla (at protein level).

It is found in the cytoplasmic vesicle. It localises to the secretory vesicle. Its subcellular location is the synaptic vesicle membrane. Its function is as follows. Synaptic vesicle phosphoprotein that enhances spontaneous neurotransmitter release but does not effect induced neurotransmitter release. Unlike other synaptotagmins, it does not bind Ca(2+) or phospholipids. Essential for mossy-fiber long-term potentiation in the hippocampus. The polypeptide is Synaptotagmin-12 (Mus musculus (Mouse)).